A 411-amino-acid polypeptide reads, in one-letter code: Translation initiation factor 2 subunit gamma (411 aa).

The 193-residue stretch at 9–201 (QPSVNIGMVG…AIEKYIPSPK (193 aa)) folds into the tr-type G domain. Residues 18-25 (GHVDHGKS) form a G1 region. Mg(2+) contacts are provided by aspartate 21, serine 25, glycine 46, and serine 48. Residue 21-26 (DHGKST) coordinates GTP. The G2 stretch occupies residues 46-50 (GISIK). Residues 88-91 (DAPG) form a G3 region. Residues 144 to 147 (NKID) and 179 to 181 (SAY) each bind GTP. The segment at 144–147 (NKID) is G4. The G5 stretch occupies residues 179–181 (SAY).

Belongs to the TRAFAC class translation factor GTPase superfamily. Classic translation factor GTPase family. EIF2G subfamily. Heterotrimer composed of an alpha, a beta and a gamma chain. Mg(2+) serves as cofactor.

It carries out the reaction GTP + H2O = GDP + phosphate + H(+). EIF-2 functions in the early steps of protein synthesis by forming a ternary complex with GTP and initiator tRNA. The sequence is that of Translation initiation factor 2 subunit gamma from Thermoplasma acidophilum (strain ATCC 25905 / DSM 1728 / JCM 9062 / NBRC 15155 / AMRC-C165).